Here is a 365-residue protein sequence, read N- to C-terminus: MRPHERFHDFLDDFRNPYSRDRDRIIHCSSFRRLEYKTQVFLNSSGDYFRTRLTHSIEVSQIARSIASHLGLNETLAEAIALSHDLGHTPFGHAGGDELDRLLKKHGFEAGFDHNFQSFRVVSKLEKRYPNFEGLNLTFATLEGILKHSYPYQKSFLDAAMNEIFALDYHPSLEAIVVDHADEIAYVSHDIDDGIKYGLIRLEDLEESELVGEMIDKAEQEGVKRSEKVFRYRFVSNLINHLVYGFLEGSQEARLHQGEVRSAMIPSGERLPLGFSPEMGRKLKKLKKLLFTKLYRHEQVNRKMFFGRGCIRALFEDFMNEKNLLPKELQERINQGGKAHRVVADYIASMSDRYAMNLYKELHIG.

Residues 52 to 187 (RLTHSIEVSQ…VDHADEIAYV (136 aa)) enclose the HD domain.

The protein belongs to the dGTPase family. Type 2 subfamily.

This chain is Deoxyguanosinetriphosphate triphosphohydrolase-like protein, found in Wolinella succinogenes (strain ATCC 29543 / DSM 1740 / CCUG 13145 / JCM 31913 / LMG 7466 / NCTC 11488 / FDC 602W) (Vibrio succinogenes).